The chain runs to 196 residues: Prefoldin subunit 3 (196 aa).

Alanine 2 carries the N-acetylalanine modification. An N6-acetyllysine modification is found at lysine 58.

The protein belongs to the prefoldin subunit alpha family. In terms of assembly, heterohexamer of two PFD-alpha type and four PFD-beta type subunits. Binds to the C-terminal part of VHL.

Its subcellular location is the cytoplasm. The protein localises to the nucleus. In terms of biological role, binds specifically to cytosolic chaperonin (c-CPN) and transfers target proteins to it. Binds to nascent polypeptide chain and promotes folding in an environment in which there are many competing pathways for nonnative proteins. The protein is Prefoldin subunit 3 (Vbp1) of Mus musculus (Mouse).